The following is a 157-amino-acid chain: Protein Smg homolog (157 aa).

Belongs to the Smg family.

This chain is Protein Smg homolog, found in Pseudoalteromonas translucida (strain TAC 125).